The primary structure comprises 430 residues: Adenylosuccinate synthetase (430 aa).

Residues 13–19 (GDEGKGK) and 41–43 (GHT) contribute to the GTP site. Aspartate 14 serves as the catalytic Proton acceptor. Residues aspartate 14 and glycine 41 each contribute to the Mg(2+) site. IMP is bound by residues 14-17 (DEGK), 39-42 (NAGH), threonine 130, arginine 144, glutamine 225, threonine 240, and arginine 304. Residue histidine 42 is the Proton donor of the active site. Substrate is bound at residue 300–306 (ASTGRPR). Residues arginine 306, 332–334 (KLD), and 414–416 (STG) each bind GTP.

This sequence belongs to the adenylosuccinate synthetase family. As to quaternary structure, homodimer. Mg(2+) is required as a cofactor.

Its subcellular location is the cytoplasm. It carries out the reaction IMP + L-aspartate + GTP = N(6)-(1,2-dicarboxyethyl)-AMP + GDP + phosphate + 2 H(+). Its pathway is purine metabolism; AMP biosynthesis via de novo pathway; AMP from IMP: step 1/2. Its function is as follows. Plays an important role in the de novo pathway of purine nucleotide biosynthesis. Catalyzes the first committed step in the biosynthesis of AMP from IMP. The polypeptide is Adenylosuccinate synthetase (Xanthomonas campestris pv. campestris (strain 8004)).